The chain runs to 274 residues: Bis(5'-nucleosyl)-tetraphosphatase, symmetrical (274 aa).

The protein belongs to the Ap4A hydrolase family.

The enzyme catalyses P(1),P(4)-bis(5'-adenosyl) tetraphosphate + H2O = 2 ADP + 2 H(+). Its function is as follows. Hydrolyzes diadenosine 5',5'''-P1,P4-tetraphosphate to yield ADP. The sequence is that of Bis(5'-nucleosyl)-tetraphosphatase, symmetrical from Shewanella sp. (strain MR-7).